The following is a 275-amino-acid chain: Large ribosomal subunit protein uL2 (275 aa).

2 disordered regions span residues 34 to 59 (LEKK…GGHK) and 223 to 275 (VAMN…RNKK).

This sequence belongs to the universal ribosomal protein uL2 family. As to quaternary structure, part of the 50S ribosomal subunit. Forms a bridge to the 30S subunit in the 70S ribosome.

Its function is as follows. One of the primary rRNA binding proteins. Required for association of the 30S and 50S subunits to form the 70S ribosome, for tRNA binding and peptide bond formation. It has been suggested to have peptidyltransferase activity; this is somewhat controversial. Makes several contacts with the 16S rRNA in the 70S ribosome. The polypeptide is Large ribosomal subunit protein uL2 (Teredinibacter turnerae (strain ATCC 39867 / T7901)).